Reading from the N-terminus, the 747-residue chain is Potassium transporter 20 (747 aa).

Topologically, residues 1–47 (MSVQEDDDAAGPEVDRLRRHDSFYGDAEKVSNDKSHGTGENWARTLQ) are cytoplasmic. The chain crosses the membrane as a helical span at residues 48–68 (LAFQSIGVVYGDVGTSPLYVY). At 69 to 84 (SSTFPDGVKHPDDLVG) the chain is on the extracellular side. The chain crosses the membrane as a helical span at residues 85-105 (VLSLMLYTLILIPMVKYVFIV). Residues 106-171 (LYANDNGDGG…QKLESSNAAK (66 aa)) are Cytoplasmic-facing. A helical transmembrane segment spans residues 172–192 (IALFTITILGTSMVMGDGTLT). Residues 193-209 (PAISVLSAVSGIREKAP) lie on the Extracellular side of the membrane. Residues 210 to 230 (SLTQLQVVWISVPILIVLFSV) form a helical membrane-spanning segment. Residues 231 to 237 (QRFGTDK) are Cytoplasmic-facing. A helical transmembrane segment spans residues 238–258 (VGYSFAPVISVWFVLIAGIGA). Over 259–288 (YNLAVHEITILRAFNPMYIIDYFRRNGKEA) the chain is Extracellular. A helical transmembrane segment spans residues 289–309 (WVSLGGAVLCITGTEAMFADL). Topologically, residues 310 to 318 (GHFNIRAIQ) are cytoplasmic. A helical membrane pass occupies residues 319–339 (LSFTCVLFPSVALCYMGQAAY). Residues 340 to 353 (LRKFPEDVGDTFYK) are Extracellular-facing. Residues 354 to 374 (SLPAPLFWPVFVVAIMAAIIA) form a helical membrane-spanning segment. Over 375–410 (SQAMLSGAFAILSKALPLGCFPRVEVVHTSNKYEGQ) the chain is Cytoplasmic. The helical transmembrane segment at 411–431 (VYIPEVNFLIGVASVAITVAF) threads the bilayer. At 432 to 442 (QTTANIGNAYG) the chain is on the extracellular side. The helical transmembrane segment at 443-463 (ICVVMVFSITTHLMTVVMLLI) threads the bilayer. At 464–469 (WKVRLP) the chain is on the cytoplasmic side. The helical transmembrane segment at 470–490 (FIAAFYVVFTFTEFLYLSSIL) threads the bilayer. Residues 491–496 (SKFAEG) lie on the Extracellular side of the membrane. A helical transmembrane segment spans residues 497 to 517 (GYLPFCFSLVLMALMATWHYV). The Cytoplasmic portion of the chain corresponds to 518 to 747 (HVKRYWYELD…LLKVGITYEI (230 aa)).

The protein belongs to the HAK/KUP transporter (TC 2.A.72.3) family.

The protein localises to the membrane. In terms of biological role, high-affinity potassium transporter. In Oryza sativa subsp. japonica (Rice), this protein is Potassium transporter 20 (HAK20).